The following is a 156-amino-acid chain: Small ribosomal subunit protein uS7 (156 aa).

Belongs to the universal ribosomal protein uS7 family. Part of the 30S ribosomal subunit. Contacts proteins S9 and S11.

Functionally, one of the primary rRNA binding proteins, it binds directly to 16S rRNA where it nucleates assembly of the head domain of the 30S subunit. Is located at the subunit interface close to the decoding center, probably blocks exit of the E-site tRNA. The chain is Small ribosomal subunit protein uS7 from Bacillus cytotoxicus (strain DSM 22905 / CIP 110041 / 391-98 / NVH 391-98).